A 152-amino-acid polypeptide reads, in one-letter code: UPF0178 protein SaurJH9_0705 (152 aa).

The protein belongs to the UPF0178 family.

This Staphylococcus aureus (strain JH9) protein is UPF0178 protein SaurJH9_0705.